A 1936-amino-acid chain; its full sequence is MFANKTEKRNVQNKHKYIDGGKLSKDKDKIDETGSNTEKYIKIDNASKKEIIIFSKNSELIDNKKIKEINENGYNKLKINTHDEFNITKKKMKNSNDNIIYNSPNSKIKVVSNNNFKDRKKGMNHKKKKGISINQITLFKIHNYIYKTFVFLLCLFIVILVLYASIDISQNYGPIIILYIIMLEFGSMLISYILLQFPFFYLILKNMFTRTSNINKYSHQYSPLYYENPSDSDDKDSIDVKRRETKQRRKTFGFFNLNNIDHNKYSIKKNILPTKLKVYNKEESDKYEYGNLNHVLNTNLSNTKSRSADEAENYIIEDTNMNHNGENVNNKSKKGNQPIKIRNHKRENIYLDDCNMWIRNSIKKSRVKGNFNLTRSLSFNIKLSENNVILNDSRNIDNLRIYLNHRSSKYEKKKNQIKPLKLFAYNKYAPLTFSTPYKYNVPSDIFKTNTGESKILSAEISESSNDVNGLLHKNNDKSYSEEKYHLDKRKTDNEFYTGKSAILFSNKHTKQYMRKKTFMYDDLDSLNIYKNKKHNRKNKKKSIFCKIKCFNKIKNILFFFVNYNIKSSKTQNTMLLFFRGLTLYIKHQFIQHLSYEPVWIIAILIRIILWCIVWLWAAGYMTRPPKNYKINAWNMKSIPPLYGYIECTFQWCGVLDYLFGLYFSNNKLKYIFSFFSLIDFITTPVSSFIMNFLWQNDYHQTYWFLILGPLRFLRLVRAESTMSSCFFWLSDVKIIIIGIIILSLAILFTFSGIMYILEAPDIERQFISPLDFVYFGVITMSTVGYGDYTPVTPAGKCLTMFIIVTCFTFVGAQLKRLKEAMFSPKTIMGIIPKPDDDYILILGPVSPIQLLYICKGINNSFPNSVESIFLFTPLPVIIYRYVYGSIIKNTNIKICINGGNECFICPSIIYDAVINARALYILNNVDSEKYTLLNQQIFLASNNFNFNNNDKNQRIRPEDILHNNIINKFTGDKKKTWKFTDIYSEHKNQINKNNMLNLEMNINVNDSHMIREKDDQECILRFIGTYNISNALIPITVQLSNNTYEELIKSMNVYNYISIEELKYALLAKSINCKGLFFLIINFFYKPKAVKSLKKYIIDLRLLMYNNILKKKNHKKINSTNIKIKTFNELSSSHSENKLSDTSSMINYKSKSRVNYKMVKGTKNEFIRNQNYNINSIYYANNDNMHNEQNNNINDDDDAFKMIGCENDDNFLYNSYRNTYGINNNIQHYKSNSSKSFYNNKKSGNYNEGNTSFSKTVGSMNSSQDVPSKNYYNILEKISLNMYYYLEGLKYNIYRFQFPECMRGFLFQTASEYLYQKHGAFLIGIITINKEIFLNPIDYIIGEENKYYYTSAFSGIILTTSLDNLIKLSSIKYISKKVSEYNQRRINERRKRYAKNTVSTDGENGYSKDLGFSEKNNNNYENIEKNKNIDKWQNSIISKQNTSIMHREDNKINKLDKSIEQNTNIYKINDKDNTDNNEDKNSKINKNNSNFKMEIISKKNKLILYNFVLGIYEVDNYVSAYRDIFDDKRKPLLLICGWPDNIHMLLKHLKINIYKTMKYKKKNRIQNGNDEYNNNNDKINRNYRSYGDRMKYNIIILSIHVPKFNYENDLLDFSNNTAFIRGSSMDSTNLIKGGIFYAKRIIILNSNHSLFVDKDAYRIDNEVIIIKNVIYQLYNNIFKNKKIYLEIIKKIFKKEYTDKYINEKIIFDTNIENNNKHDEFQNDSYTSNSDSENKMVNKQKNKINYNIFNVNKNPYIICLIKNSESLEYIDGSINLSYENYNDNEKMNKIWENCGEYIYTFELVSANIFVDEMLHNLVSFSLPISKYAIEYSVIYSLIGININEYSKNVNMFHKNLKLSTGHVLIIPIPSYFYKKPFYRCFFYLLHKKKYLCIGILRYINISPLRNISRKLFILSCPSRTMKIEHYDQAYVIAYNTV.

6 helical membrane-spanning segments follow: residues 175–195 (IIILYIIMLEFGSMLISYILL), 598–618 (VWIIAILIRIILWCIVWLWAA), 643–663 (GYIECTFQWCGVLDYLFGLYF), 670–690 (YIFSFFSLIDFITTPVSSFIM), 701–721 (TYWFLILGPLRFLRLVRAEST), and 734–754 (IIIIGIIILSLAILFTFSGIM). An intramembrane region (pore-forming) is located at residues 772-788 (FVYFGVITMSTVGYGDY). Residues 791–811 (VTPAGKCLTMFIIVTCFTFVG) form a helical membrane-spanning segment. Positions 1141 to 1185 (DTSSMINYKSKSRVNYKMVKGTKNEFIRNQNYNINSIYYANNDNM) form a coiled coil.

It is found in the membrane. The enzyme catalyses K(+)(in) = K(+)(out). Its activity is regulated as follows. Partially inhibited by Ba(2+) and quinine. Probably insensitive to tetraethylammonium (TEA). Likely a predominant potassium channel in the erythrocytic stages of parasites. Mediates transmembrane potassium transport. Required for the development of oocysts in the mosquito midgut. The protein is Potassium channel K1 of Plasmodium berghei (strain Anka).